Reading from the N-terminus, the 231-residue chain is Phosphoglycolate phosphatase (231 aa).

The active-site Nucleophile is the Asp9. The Mg(2+) site is built by Asp9 and Asp11. Asp11 (proton donor) is an active-site residue. Residue Lys154 participates in substrate binding. Mg(2+) contacts are provided by Asp177 and Asp181.

The protein belongs to the archaeal SPP-like hydrolase family. As to quaternary structure, homodimer. Mg(2+) is required as a cofactor.

The catalysed reaction is 2-phosphoglycolate + H2O = glycolate + phosphate. In terms of biological role, catalyzes the dephosphorylation of 2-phosphoglycolate. Has phosphatase activity towards p-nitrophenylphosphate (in vitro). This is Phosphoglycolate phosphatase from Pyrococcus horikoshii (strain ATCC 700860 / DSM 12428 / JCM 9974 / NBRC 100139 / OT-3).